Here is a 226-residue protein sequence, read N- to C-terminus: MAGGGAGDPGQGAAAAAAAAPETREHLFKVLVIGELGVGKTSIIKRYVHQLFSQHYRATIGVDFALKVLNWDSRTLVRLQLWDIAGQERFGNMTRVYYKEAVGALVVFDISRGSPFEAVLKWKNDLDSKVHLPNGSPIPAVLLANKCDQKKDSGQNPSQMDQFCKEHGFTGWFETSAKDNINIDEAARFLVENILANHQSFPSEENDGRIKLDEETMKKENKSHCC.

At Ala2 the chain carries N-acetylalanine. 9 residues coordinate GTP: Val38, Gly39, Lys40, Thr41, Ser42, Ser53, Gln54, Tyr56, and Thr59. Residue Thr41 coordinates Mg(2+). A Switch 1 motif is present at residues 50 to 64 (QLFSQHYRATIGVDF). Mg(2+) is bound at residue Thr59. At Ser73 the chain carries Phosphoserine. Asp83 is a Mg(2+) binding site. The GTP site is built by Gly86, Asn145, Lys146, Asp148, Ala177, and Lys178. The short motif at 86 to 99 (GQERFGNMTRVYYK) is the Switch 2 element. Residues 180-199 (NINIDEAARFLVENILANHQ) form a PKA-RII subunit binding domain region. A disordered region spans residues 202 to 226 (PSEENDGRIKLDEETMKKENKSHCC). The span at 206-226 (NDGRIKLDEETMKKENKSHCC) shows a compositional bias: basic and acidic residues. S-geranylgeranyl cysteine attachment occurs at residues Cys225 and Cys226.

This sequence belongs to the small GTPase superfamily. Rab family. In terms of assembly, interacts with ANKRD27. A decreased interaction with ANKRD27 seen in the presence of SGSM2. Interacts with LRRK2 (via N-terminus); this interaction results in stimulation of RAB10 phosphorylation by LRRK2. Mg(2+) serves as cofactor.

Its subcellular location is the mitochondrion. The protein localises to the mitochondrion outer membrane. It is found in the cytoplasmic vesicle. It localises to the phagosome. The protein resides in the phagosome membrane. Its subcellular location is the melanosome. The protein localises to the melanosome membrane. It carries out the reaction GTP + H2O = GDP + phosphate + H(+). With respect to regulation, regulated by guanine the nucleotide exchange factor (GEF) BLOC-3 complex composed of HPS1 and HPS4 which promote the exchange of bound GDP for free GTP. Regulated by the GTPase activating protein (GAP) SGSM2/RUTBC1 which increases the GTP hydrolysis activity. Inhibited by GDP dissociation inhibitors (GDIs) which prevent Rab-GDP dissociation. In terms of biological role, the small GTPases Rab are key regulators of intracellular membrane trafficking, from the formation of transport vesicles to their fusion with membranes. Rabs cycle between an inactive GDP-bound form and an active GTP-bound form that is able to recruit to membranes different set of downstream effectors directly responsible for vesicle formation, movement, tethering and fusion. Also acts as an A-kinase anchoring protein by binding to the type II regulatory subunit of protein kinase A and anchoring it to the mitochondrion. Also involved in synchronization of mitochondrial fission. Plays a role in the maturation of phagosomes that engulf pathogens, such as S.aureus and M.tuberculosis. Plays an important role in the control of melanin production and melanosome biogenesis. In concert with RAB38, regulates the proper trafficking of melanogenic enzymes TYR, TYRP1 and DCT/TYRP2 to melanosomes in melanocytes. Stimulates phosphorylation of RAB10 'Thr-73' by LRRK2. The chain is Ras-related protein Rab-32 (RAB32) from Sus scrofa (Pig).